The primary structure comprises 151 residues: Transcriptional regulator MraZ (151 aa).

2 SpoVT-AbrB domains span residues Ala5 to Asn52 and Ala81 to Glu124.

It belongs to the MraZ family. In terms of assembly, forms oligomers.

It is found in the cytoplasm. The protein resides in the nucleoid. The protein is Transcriptional regulator MraZ of Haemophilus influenzae (strain PittGG).